The primary structure comprises 442 residues: Myb family transcription factor PHL13 (442 aa).

The 61-residue stretch at 235–295 folds into the HTH myb-type domain; it reads MTSKQRMRWT…HLQKYRTARY (61 aa). The segment at residues 266–291 is a DNA-binding region (H-T-H motif); sequence PKAVLKLINSPGLTVYHVKSHLQKYR. A coiled coil region spans residues 329-349; sequence TEALRLQMKVQKQLHEQLEIQ. The LHEQLE signature appears at 342–347; the sequence is LHEQLE. Residues 370 to 380 are compositionally biased toward basic and acidic residues; that stretch reads QQKMQENKKDS. Residues 370–442 are disordered; that stretch reads QQKMQENKKD…TSNRKRVRED (73 aa). Polar residues predominate over residues 395 to 434; the sequence is SPNLSQPFLHKATNSEPSITQKLQNGSSTMDQSESTSGTS.

Belongs to the MYB-CC family.

Its subcellular location is the nucleus. The protein is Myb family transcription factor PHL13 of Arabidopsis thaliana (Mouse-ear cress).